The primary structure comprises 126 residues: Large ribosomal subunit protein bL12 (126 aa).

It belongs to the bacterial ribosomal protein bL12 family. Homodimer. Part of the ribosomal stalk of the 50S ribosomal subunit. Forms a multimeric L10(L12)X complex, where L10 forms an elongated spine to which 2 to 4 L12 dimers bind in a sequential fashion. Binds GTP-bound translation factors.

In terms of biological role, forms part of the ribosomal stalk which helps the ribosome interact with GTP-bound translation factors. Is thus essential for accurate translation. This is Large ribosomal subunit protein bL12 from Chlorobaculum tepidum (strain ATCC 49652 / DSM 12025 / NBRC 103806 / TLS) (Chlorobium tepidum).